The primary structure comprises 464 residues: Soluble pyridine nucleotide transhydrogenase (464 aa).

An FAD-binding site is contributed by 35–44 (DSRREVGGNC).

This sequence belongs to the class-I pyridine nucleotide-disulfide oxidoreductase family. It depends on FAD as a cofactor.

The protein localises to the cytoplasm. The catalysed reaction is NAD(+) + NADPH = NADH + NADP(+). Functionally, conversion of NADPH, generated by peripheral catabolic pathways, to NADH, which can enter the respiratory chain for energy generation. The protein is Soluble pyridine nucleotide transhydrogenase of Pseudomonas syringae pv. tomato (strain ATCC BAA-871 / DC3000).